The primary structure comprises 128 residues: Probable 4-amino-4-deoxy-L-arabinose-phosphoundecaprenol flippase subunit ArnF (128 aa).

The Cytoplasmic portion of the chain corresponds to 1-2; that stretch reads MG. The chain crosses the membrane as a helical span at residues 3–23; it reads LMWGLFSVIIASVAQLSLGFA. The Periplasmic portion of the chain corresponds to 24–35; it reads ASHLPPMTHLWD. A helical membrane pass occupies residues 36–56; sequence FIAALLAFGLDARILLLGLLG. Residues 57 to 76 lie on the Cytoplasmic side of the membrane; it reads YLLSVFCWYKTLHKLALSKA. A helical transmembrane segment spans residues 77 to 97; it reads YALLSMSYVLVWIASMVLPGW. Over 98–100 the chain is Periplasmic; the sequence is EGT. A helical transmembrane segment spans residues 101–121; the sequence is FSLKALLGVACIMSGLMLIFL. Topologically, residues 122 to 128 are cytoplasmic; sequence PMTKQRY.

The protein belongs to the ArnF family. In terms of assembly, heterodimer of ArnE and ArnF.

The protein resides in the cell inner membrane. Its pathway is bacterial outer membrane biogenesis; lipopolysaccharide biosynthesis. Functionally, translocates 4-amino-4-deoxy-L-arabinose-phosphoundecaprenol (alpha-L-Ara4N-phosphoundecaprenol) from the cytoplasmic to the periplasmic side of the inner membrane. This Escherichia coli (strain 55989 / EAEC) protein is Probable 4-amino-4-deoxy-L-arabinose-phosphoundecaprenol flippase subunit ArnF.